The primary structure comprises 484 residues: Putative myrosinase 6 (484 aa).

N-linked (GlcNAc...) asparagine glycosylation is present at asparagine 28. A beta-D-glucoside is bound by residues glutamine 39, histidine 140, and 184–185 (NQ). A disulfide bridge links cysteine 204 with cysteine 207. N-linked (GlcNAc...) asparagine glycosylation occurs at asparagine 260. A beta-D-glucoside contacts are provided by residues tyrosine 321, tryptophan 440, 447 to 448 (EF), and phenylalanine 456. Residue asparagine 462 is glycosylated (N-linked (GlcNAc...) asparagine).

It belongs to the glycosyl hydrolase 1 family.

It carries out the reaction a thioglucoside + H2O = a sugar + a thiol.. This chain is Putative myrosinase 6, found in Arabidopsis thaliana (Mouse-ear cress).